The primary structure comprises 572 residues: uncharacterized protein (572 aa).

The interval 543-572 is disordered; it reads AYKKSSNTNSTTNSMNPRRSTVSSEDWVLN. Positions 547-563 are enriched in low complexity; the sequence is SSNTNSTTNSMNPRRST.

This is an uncharacterized protein from Acanthamoeba polyphaga (Amoeba).